The following is a 143-amino-acid chain: Transcriptional regulator MraZ (143 aa).

SpoVT-AbrB domains are found at residues 5–47 (EYQH…PQEE) and 76–119 (ASEC…SKSE).

This sequence belongs to the MraZ family. Forms oligomers.

The protein localises to the cytoplasm. It localises to the nucleoid. In Listeria monocytogenes serotype 4b (strain CLIP80459), this protein is Transcriptional regulator MraZ.